Here is a 268-residue protein sequence, read N- to C-terminus: Ribosomal RNA small subunit methyltransferase A (268 aa).

Asn-12, Leu-14, Gly-38, Glu-59, Asp-82, and Asn-107 together coordinate S-adenosyl-L-methionine.

This sequence belongs to the class I-like SAM-binding methyltransferase superfamily. rRNA adenine N(6)-methyltransferase family. RsmA subfamily.

It is found in the cytoplasm. It carries out the reaction adenosine(1518)/adenosine(1519) in 16S rRNA + 4 S-adenosyl-L-methionine = N(6)-dimethyladenosine(1518)/N(6)-dimethyladenosine(1519) in 16S rRNA + 4 S-adenosyl-L-homocysteine + 4 H(+). Its function is as follows. Specifically dimethylates two adjacent adenosines (A1518 and A1519) in the loop of a conserved hairpin near the 3'-end of 16S rRNA in the 30S particle. May play a critical role in biogenesis of 30S subunits. The sequence is that of Ribosomal RNA small subunit methyltransferase A from Onion yellows phytoplasma (strain OY-M).